Consider the following 332-residue polypeptide: T-cell leukemia homeobox protein 1 (332 aa).

The homeobox DNA-binding region spans 203–262; that stretch reads KKKPRTSFTRLQICELEKRFHRQKYLASAERAALAKALKMTDAQVKTWFQNRRTKWRRQT. Lys-238 is modified (N6-acetyllysine).

As to expression, expressed in various embryonic tissues, including branchial arches, some component of the nervous system and spleen.

The protein localises to the nucleus. Controls the genesis of the spleen. Binds to the DNA sequence 5'-GGCGGTAAGTGG-3'. The sequence is that of T-cell leukemia homeobox protein 1 (Tlx1) from Mus musculus (Mouse).